The sequence spans 247 residues: Flagellin B1 (247 aa).

Residues 1-20 (MNKLLRKVRKAFSLKADNKA) constitute a propeptide that is removed on maturation.

Belongs to the archaeal flagellin family. Glycosylated.

It localises to the archaeal flagellum. Functionally, flagellin is the subunit protein which polymerizes to form the filaments of archaeal flagella. This Thermoplasma volcanium (strain ATCC 51530 / DSM 4299 / JCM 9571 / NBRC 15438 / GSS1) protein is Flagellin B1.